We begin with the raw amino-acid sequence, 675 residues long: Zinc finger protein 526 (675 aa).

3 consecutive C2H2-type zinc fingers follow at residues 56–78 (FMCSECGSLYNTLEEVLSHQEQH), 108–130 (FQCGECSQLILSPSELLAHQDAH), and 140–163 (YQCGDCQELFPSPELWVAHRKTQH). Residues 160–195 (KTQHLSSAADEPPSPLPPPTPPPPPPPPPPPPPPEV) form a disordered region. Positions 171–194 (PPSPLPPPTPPPPPPPPPPPPPPE) are enriched in pro residues. The C2H2-type 4 zinc finger occupies 200–222 (YECPECSTLCATPEEFLEHQGTH). Residues 225-234 (SLEKEEHNGL) are compositionally biased toward basic and acidic residues. The interval 225 to 283 (SLEKEEHNGLEEEEEDEEEGEEEEDDDDEETDEEEASSELTADDTGSNKSTADSAQSCG) is disordered. Residues 235–261 (EEEEEDEEEGEEEEDDDDEETDEEEAS) show a composition bias toward acidic residues. The span at 269 to 281 (TGSNKSTADSAQS) shows a compositional bias: polar residues. 4 C2H2-type zinc fingers span residues 312-334 (FHCSQCQRSFSSANRLVAHGRAH), 339-361 (HECTTCSKVFKKAASLEQHQRLH), 367-389 (YLCVDCGRGFGTELTLVAHRRAH), and 395-416 (HRCRCGKTFSNMTKFLYHRRTH). The segment at 415–439 (THTGKSGTPTRVATVSPAPAEPTPP) is disordered. The span at 418–427 (GKSGTPTRVA) shows a compositional bias: polar residues. 5 C2H2-type zinc fingers span residues 447 to 470 (LPCPQCPKSFASASRLSRHRRAVH), 477 to 499 (HRCGVCGKGFKKLVHVRNHLRTH), 505 to 527 (FQCHSCGKTFASLANLSRHQLTH), 533 to 555 (YQCLDCGKRFTQSSNLQQHRRLH), and 578 to 600 (YYCGTCGRWFRAMAGLRLHQRVH). A disordered region spans residues 606 to 625 (LTLQPPRSPSPVPPPPPEPQ). The span at 611–624 (PRSPSPVPPPPPEP) shows a compositional bias: pro residues.

The protein belongs to the krueppel C2H2-type zinc-finger protein family.

It is found in the nucleus. Functionally, may be involved in transcriptional regulation. The sequence is that of Zinc finger protein 526 (Znf526) from Mus musculus (Mouse).